A 113-amino-acid chain; its full sequence is Iron-sulfur cluster insertion protein ErpA (113 aa).

Residues C41, C105, and C107 each contribute to the iron-sulfur cluster site.

It belongs to the HesB/IscA family. Homodimer. Iron-sulfur cluster is required as a cofactor.

Functionally, required for insertion of 4Fe-4S clusters for at least IspG. This is Iron-sulfur cluster insertion protein ErpA from Colwellia psychrerythraea (strain 34H / ATCC BAA-681) (Vibrio psychroerythus).